The following is a 217-amino-acid chain: MTAPLTLALSKGRIFEETLPLLAAAGVQVAEDPETSRKLILPTTDPNLRVIIVRASDVPTYVEYGAADFGVAGKDVLVEHGGSGLYQPIDLNIARCRMSVAVPAGFDYANAVRQGARLRVATKYVETAREHFAAKGVHVDLIKLYGSMELAPLVGLADAIVDLVSSGGTLKANNLVEVEEIMAISSRLVVNQAALKLKRAALKPILDAFERASQNGG.

This sequence belongs to the ATP phosphoribosyltransferase family. Short subfamily. As to quaternary structure, heteromultimer composed of HisG and HisZ subunits.

It localises to the cytoplasm. It catalyses the reaction 1-(5-phospho-beta-D-ribosyl)-ATP + diphosphate = 5-phospho-alpha-D-ribose 1-diphosphate + ATP. It functions in the pathway amino-acid biosynthesis; L-histidine biosynthesis; L-histidine from 5-phospho-alpha-D-ribose 1-diphosphate: step 1/9. Functionally, catalyzes the condensation of ATP and 5-phosphoribose 1-diphosphate to form N'-(5'-phosphoribosyl)-ATP (PR-ATP). Has a crucial role in the pathway because the rate of histidine biosynthesis seems to be controlled primarily by regulation of HisG enzymatic activity. The sequence is that of ATP phosphoribosyltransferase from Burkholderia orbicola (strain AU 1054).